The primary structure comprises 394 residues: 1-deoxy-D-xylulose 5-phosphate reductoisomerase (394 aa).

NADPH is bound by residues Thr-13, Gly-14, Ser-15, Val-16, Arg-40, Gln-41, and Asn-127. Lys-128 lines the 1-deoxy-D-xylulose 5-phosphate pocket. Glu-129 contributes to the NADPH binding site. Residue Asp-153 participates in Mn(2+) binding. The 1-deoxy-D-xylulose 5-phosphate site is built by Ser-154, Glu-155, Ser-184, and His-207. Glu-155 lines the Mn(2+) pocket. Gly-213 lines the NADPH pocket. 1-deoxy-D-xylulose 5-phosphate-binding residues include Ser-220, Asn-225, Lys-226, and Glu-229. Glu-229 is a binding site for Mn(2+).

This sequence belongs to the DXR family. Mg(2+) is required as a cofactor. Requires Mn(2+) as cofactor.

The catalysed reaction is 2-C-methyl-D-erythritol 4-phosphate + NADP(+) = 1-deoxy-D-xylulose 5-phosphate + NADPH + H(+). It participates in isoprenoid biosynthesis; isopentenyl diphosphate biosynthesis via DXP pathway; isopentenyl diphosphate from 1-deoxy-D-xylulose 5-phosphate: step 1/6. In terms of biological role, catalyzes the NADPH-dependent rearrangement and reduction of 1-deoxy-D-xylulose-5-phosphate (DXP) to 2-C-methyl-D-erythritol 4-phosphate (MEP). In Chromobacterium violaceum (strain ATCC 12472 / DSM 30191 / JCM 1249 / CCUG 213 / NBRC 12614 / NCIMB 9131 / NCTC 9757 / MK), this protein is 1-deoxy-D-xylulose 5-phosphate reductoisomerase.